The following is a 369-amino-acid chain: O-methyltransferase 12 (369 aa).

S-adenosyl-L-methionine-binding positions include G181, D204, 229-231, D230, F231, and K244; that span reads GDF. The Proton acceptor role is filled by H248.

The protein belongs to the class I-like SAM-binding methyltransferase superfamily. Cation-independent O-methyltransferase family. COMT subfamily.

The enzyme catalyses resorcinol + S-adenosyl-L-methionine = 3-methoxyphenol + S-adenosyl-L-homocysteine + H(+). Its function is as follows. S-adenosyl-L-methionine dependent O-methyltransferase that may be involved in modifying resorcinol ring to synthesize a variant of 4-methyl-5-pentylbenzene-1,3-diol. The polypeptide is O-methyltransferase 12 (omt12) (Dictyostelium discoideum (Social amoeba)).